The sequence spans 159 residues: SsrA-binding protein (159 aa).

Residues 131-148 (YDKRQTLREKQDRREAER) are compositionally biased toward basic and acidic residues. Residues 131-159 (YDKRQTLREKQDRREAERTISAIKRKQRA) are disordered.

The protein belongs to the SmpB family.

The protein resides in the cytoplasm. Required for rescue of stalled ribosomes mediated by trans-translation. Binds to transfer-messenger RNA (tmRNA), required for stable association of tmRNA with ribosomes. tmRNA and SmpB together mimic tRNA shape, replacing the anticodon stem-loop with SmpB. tmRNA is encoded by the ssrA gene; the 2 termini fold to resemble tRNA(Ala) and it encodes a 'tag peptide', a short internal open reading frame. During trans-translation Ala-aminoacylated tmRNA acts like a tRNA, entering the A-site of stalled ribosomes, displacing the stalled mRNA. The ribosome then switches to translate the ORF on the tmRNA; the nascent peptide is terminated with the 'tag peptide' encoded by the tmRNA and targeted for degradation. The ribosome is freed to recommence translation, which seems to be the essential function of trans-translation. The chain is SsrA-binding protein from Streptomyces coelicolor (strain ATCC BAA-471 / A3(2) / M145).